Consider the following 396-residue polypeptide: Immunoglobulin heavy constant gamma 4 (396 aa).

A CH1 region spans residues 1 to 98 (ASTKGPSVFP…PSNTKVDKRV (98 aa)). The Extracellular segment spans residues 1–347 (ASTKGPSVFP…DGELDGLWTT (347 aa)). Ig-like domains follow at residues 6-99 (PSVF…KRVE), 118-217 (PSVF…KTIS), and 226-322 (PQVY…KSLS). Cysteines 27 and 83 form a disulfide. Residues 99 to 110 (ESKYGPPCPSCP) are hinge. Residues 111 to 220 (APEFLGGPSV…SIEKTISKAK (110 aa)) form a CH2 region. Disulfide bonds link Cys-141–Cys-201 and Cys-247–Cys-305. N-linked (GlcNAc...) (complex) asparagine glycosylation is present at Asn-177. The interval 221 to 327 (GQPREPQVYT…QKSLSLSLEL (107 aa)) is CH3. A helical membrane pass occupies residues 348–368 (ITIFITLFLLSVCYSATVTFF). Topologically, residues 369-396 (KVKWIFSSVVDLKQTIVPDYRNMIRQGA) are cytoplasmic.

As to quaternary structure, immunoglobulins are composed of two identical heavy chains and two identical light chains; disulfide-linked. Glycosylation on Asn-177 is required for interaction with Fc receptors and ability to activate the complement pathway. Post-translationally, (Microbial infection) Deglycosylation on Asn-177 by S.pyogenes EndoS or Endos2 endoglucosidases prevents interaction between immunoglobulin-gamma (IgG) and Fc receptors, impairing ability to activate the complement pathway.

Its subcellular location is the secreted. It localises to the cell membrane. Its function is as follows. Constant region of immunoglobulin heavy chains. Immunoglobulins, also known as antibodies, are membrane-bound or secreted glycoproteins produced by B lymphocytes. In the recognition phase of humoral immunity, the membrane-bound immunoglobulins serve as receptors which, upon binding of a specific antigen, trigger the clonal expansion and differentiation of B lymphocytes into immunoglobulins-secreting plasma cells. Secreted immunoglobulins mediate the effector phase of humoral immunity, which results in the elimination of bound antigens. The antigen binding site is formed by the variable domain of one heavy chain, together with that of its associated light chain. Thus, each immunoglobulin has two antigen binding sites with remarkable affinity for a particular antigen. The variable domains are assembled by a process called V-(D)-J rearrangement and can then be subjected to somatic hypermutations which, after exposure to antigen and selection, allow affinity maturation for a particular antigen. This Homo sapiens (Human) protein is Immunoglobulin heavy constant gamma 4.